The following is a 332-amino-acid chain: Cell growth regulator with RING finger domain protein 1 (332 aa).

Residues 274–309 form an RING-type zinc finger; the sequence is CVVCQNGGVNWVLLPCRHACLCDSCVRYFKQCPMCR.

It localises to the nucleus. It is found in the endoplasmic reticulum. In terms of biological role, able to inhibit growth in several cell lines. This is Cell growth regulator with RING finger domain protein 1 (Cgrrf1) from Mus musculus (Mouse).